Here is a 291-residue protein sequence, read N- to C-terminus: Shikimate dehydrogenase (NADP(+)) (291 aa).

Shikimate contacts are provided by residues 14-16 and T61; that span reads SKS. The active-site Proton acceptor is K65. Position 77 (E77) interacts with NADP(+). Shikimate contacts are provided by N86 and D102. NADP(+) is bound by residues 139 to 143, 164 to 169, and L232; these read GAGGA and NRTFSR. Residue Y234 participates in shikimate binding. An NADP(+)-binding site is contributed by G256.

The protein belongs to the shikimate dehydrogenase family. Homodimer.

It catalyses the reaction shikimate + NADP(+) = 3-dehydroshikimate + NADPH + H(+). It functions in the pathway metabolic intermediate biosynthesis; chorismate biosynthesis; chorismate from D-erythrose 4-phosphate and phosphoenolpyruvate: step 4/7. Involved in the biosynthesis of the chorismate, which leads to the biosynthesis of aromatic amino acids. Catalyzes the reversible NADPH linked reduction of 3-dehydroshikimate (DHSA) to yield shikimate (SA). The protein is Shikimate dehydrogenase (NADP(+)) of Blochmanniella pennsylvanica (strain BPEN).